The sequence spans 298 residues: ATP synthase F(1) complex subunit gamma, mitochondrial (298 aa).

A mitochondrion-targeting transit peptide spans 1 to 25; the sequence is MFSRAGVAGLSAWTLQPQWIQVRNM. An N6-acetyllysine modification is found at Lys-39. N6-succinyllysine is present on Lys-49. Position 55 is an N6-acetyllysine (Lys-55). Position 115 is an N6-acetyllysine; alternate (Lys-115). The residue at position 115 (Lys-115) is an N6-succinyllysine; alternate. Ser-146 carries the post-translational modification Phosphoserine. Lys-154 is modified (N6-acetyllysine; alternate). The residue at position 154 (Lys-154) is an N6-succinyllysine; alternate. Lys-197 carries the post-translational modification N6-acetyllysine. Lys-270 carries the N6-succinyllysine modification.

It belongs to the ATPase gamma chain family. As to quaternary structure, component of the ATP synthase complex composed at least of ATP5F1A/subunit alpha, ATP5F1B/subunit beta, ATP5MC1/subunit c (homooctomer), MT-ATP6/subunit a, MT-ATP8/subunit 8, ATP5ME/subunit e, ATP5MF/subunit f, ATP5MG/subunit g, ATP5MK/subunit k, ATP5MJ/subunit j, ATP5F1C/subunit gamma, ATP5F1D/subunit delta, ATP5F1E/subunit epsilon, ATP5PF/subunit F6, ATP5PB/subunit b, ATP5PD/subunit d, ATP5PO/subunit OSCP. ATP synthase complex consists of a soluble F(1) head domain (subunits alpha(3) and beta(3)) - the catalytic core - and a membrane F(0) domain - the membrane proton channel (subunits c, a, 8, e, f, g, k and j). These two domains are linked by a central stalk (subunits gamma, delta, and epsilon) rotating inside the F1 region and a stationary peripheral stalk (subunits F6, b, d, and OSCP). Interacts with FLVCR2; this interaction occurs in the absence of heme and is disrupted upon heme binding.

The protein localises to the mitochondrion inner membrane. In terms of biological role, subunit gamma, of the mitochondrial membrane ATP synthase complex (F(1)F(0) ATP synthase or Complex V) that produces ATP from ADP in the presence of a proton gradient across the membrane which is generated by electron transport complexes of the respiratory chain. ATP synthase complex consist of a soluble F(1) head domain - the catalytic core - and a membrane F(1) domain - the membrane proton channel. These two domains are linked by a central stalk rotating inside the F(1) region and a stationary peripheral stalk. During catalysis, ATP synthesis in the catalytic domain of F(1) is coupled via a rotary mechanism of the central stalk subunits to proton translocation. In vivo, can only synthesize ATP although its ATP hydrolase activity can be activated artificially in vitro. With the central stalk subunit delta, is essential for the biogenesis of F(1) catalytic part of the ATP synthase complex namely in the formation of F1 assembly intermediate. This Macaca fascicularis (Crab-eating macaque) protein is ATP synthase F(1) complex subunit gamma, mitochondrial.